A 394-amino-acid chain; its full sequence is Proliferation-associated protein 2G4 (394 aa).

S2 is subject to N-acetylserine. S2 carries the post-translational modification Phosphoserine. The tract at residues 2–48 (SGEDEQQEQTIAEDLVVTKYKMGGDIANRVLRSLVEASSSGVSVLSL) is necessary for nucleolar localization. An RNA-binding region spans residues 46–54 (LSLCEKGDA). A Glycyl lysine isopeptide (Lys-Gly) (interchain with G-Cter in SUMO2) cross-link involves residue K298. The interval 301–394 (LLQPFNVLYE…ETLEENEAGD (94 aa)) is necessary for nucleolar localization. S335 is modified (phosphoserine). The interval 358–394 (LQSSASRKTQKKKKKKASKTAENATSGETLEENEAGD) is disordered. S361 is modified (phosphoserine; by PKC/PRKCD). The tract at residues 361–375 (SASRKTQKKKKKKAS) is interaction with RNA. Over residues 365–375 (KTQKKKKKKAS) the composition is skewed to basic residues. Phosphothreonine occurs at positions 366 and 386.

This sequence belongs to the peptidase M24 family. In terms of assembly, isoform 2 interacts with the cytoplasmic domain of non-phosphorylated ERBB3; the interaction requires PKC activity. Interacts with AR. Treatment with HRG leads to dissociation from ERBB3 and increases association with AR. Interacts with NCL/nucleolin. Component of a ribonucleoprotein complex containing at least PA2G4, NCL, TOP1, PABPC2, RPLP0, acetylated histone H1 (HIST1H1A or H1F1), histone H1 2/4, RPL4, RPL8, RPL15, RPL18, RPL18A, RPL21, RPL11, RPL12, RPL28, RPL27, RPLP2 and RPL24. Interacts with HDAC2. Interacts with RB1; the interaction is enhanced upon PA2G4 dephosphorylation. Interacts with AKT1. Isoform 1 and isoform 2 interact with RNF20. Isoform 2 interacts with HUWE1. Interacts with DNAJC21. In terms of processing, phosphorylated on serine and threonine residues. Phosphorylation is enhanced by HRG treatment. Basal phosphorylation is PKC-dependent and HRG-induced phosphorylation is predominantly PKC-independent. Phosphorylation at Ser-361 by PKC/PRKCD regulates its nucleolar localization. Post-translationally, in cancer cells, isoform 2 is polyubiquitinated leading to its proteasomal degradation and phosphorylation by PKC/PRKCD enhances polyubiquitination. As to expression, isoform 2 is undetectable whereas isoform 1 is strongly expressed in cancer cells (at protein level). Isoform 1 and isoform 2 are widely expressed, including heart, brain, lung, pancreas, skeletal muscle, kidney, placenta and liver.

The protein localises to the cytoplasm. It localises to the nucleus. The protein resides in the nucleolus. May play a role in a ERBB3-regulated signal transduction pathway. Seems be involved in growth regulation. Acts a corepressor of the androgen receptor (AR) and is regulated by the ERBB3 ligand neuregulin-1/heregulin (HRG). Inhibits transcription of some E2F1-regulated promoters, probably by recruiting histone acetylase (HAT) activity. Binds RNA. Associates with 28S, 18S and 5.8S mature rRNAs, several rRNA precursors and probably U3 small nucleolar RNA. May be involved in regulation of intermediate and late steps of rRNA processing. May be involved in ribosome assembly. Mediates cap-independent translation of specific viral IRESs (internal ribosomal entry site). Regulates cell proliferation, differentiation, and survival. Isoform 1 suppresses apoptosis whereas isoform 2 promotes cell differentiation. In Homo sapiens (Human), this protein is Proliferation-associated protein 2G4 (PA2G4).